The primary structure comprises 864 residues: Alanine--tRNA ligase (864 aa).

The Zn(2+) site is built by H553, H557, C655, and H659. The interval 828 to 847 (VGGKGGGRPDMAQAGGKDPS) is disordered.

This sequence belongs to the class-II aminoacyl-tRNA synthetase family. Requires Zn(2+) as cofactor.

Its subcellular location is the cytoplasm. The enzyme catalyses tRNA(Ala) + L-alanine + ATP = L-alanyl-tRNA(Ala) + AMP + diphosphate. Functionally, catalyzes the attachment of alanine to tRNA(Ala) in a two-step reaction: alanine is first activated by ATP to form Ala-AMP and then transferred to the acceptor end of tRNA(Ala). Also edits incorrectly charged Ser-tRNA(Ala) and Gly-tRNA(Ala) via its editing domain. This is Alanine--tRNA ligase from Hydrogenovibrio crunogenus (strain DSM 25203 / XCL-2) (Thiomicrospira crunogena).